A 146-amino-acid polypeptide reads, in one-letter code: Hemoglobin subunit beta (146 aa).

Val1 bears the N-acetylvaline mark. Positions 2-146 (HLTGEEKSAV…VANALAHKYH (145 aa)) constitute a Globin domain. Residue Thr12 is modified to Phosphothreonine. A Phosphoserine modification is found at Ser44. At Lys59 the chain carries N6-acetyllysine. His63 serves as a coordination point for heme b. Lys82 is subject to N6-acetyllysine. His92 is a heme b binding site. Position 93 is an S-nitrosocysteine (Cys93). The residue at position 144 (Lys144) is an N6-acetyllysine.

Belongs to the globin family. As to quaternary structure, heterotetramer of two alpha chains and two beta chains. As to expression, red blood cells.

Involved in oxygen transport from the lung to the various peripheral tissues. This chain is Hemoglobin subunit beta (HBB), found in Mico argentatus (Silvery marmoset).